Consider the following 2703-residue polypeptide: Serine/arginine repetitive matrix protein 2 (2703 aa).

At Met-1 the chain carries N-acetylmethionine. Residues 60-92 (HERKRRVELRCLELEEMMEEQGYEEQQIQEKVA) are a coiled coil. Lys-101 is modified (N6-acetyllysine). Residues Lys-108 and Lys-130 each participate in a glycyl lysine isopeptide (Lys-Gly) (interchain with G-Cter in SUMO2) cross-link. A disordered region spans residues 141 to 1007 (ISDSYVDGSS…SGSFHLCPGV (867 aa)). Tyr-145 is modified (phosphotyrosine). Residue Lys-169 is modified to N6-acetyllysine. Basic residues-rich tracts occupy residues 186 to 197 (KQKKKKKKKDRG) and 207 to 249 (RERK…KRSR). The segment at 197-259 (GRRSESSSPR…STTPAPKSRR (63 aa)) is sufficient for RNA-binding. A phosphoserine mark is found at Ser-220 and Ser-222. Residues 263-284 (STSADSASSSDTSRSRSRSAAA) show a composition bias toward low complexity. Phosphoserine occurs at positions 295, 300, 310, 322, and 323. Residues 319–334 (QQPSSPAPSTKQSSSP) show a composition bias toward low complexity. The segment covering 335–345 (YEDKDKKEKSA) has biased composition (basic and acidic residues). Phosphoserine is present on residues Ser-349, Ser-351, Ser-355, and Ser-356. Residues Thr-357 and Thr-365 each carry the phosphothreonine modification. Phosphoserine is present on residues Ser-375, Ser-385, Ser-393, Ser-396, Ser-402, Ser-406, Ser-422, Ser-433, Ser-434, Ser-435, Ser-438, Ser-452, Ser-482, Ser-484, Ser-503, Ser-505, Ser-507, Ser-531, Ser-533, and Ser-540. Residues 383 to 396 (PSSQEPVNPSSEAS) show a composition bias toward polar residues. Polar residues predominate over residues 425–437 (PTKGSRHASSSPE). Over residues 459 to 533 (NRSHGRAKRD…SPQRRGRSRS (75 aa)) the composition is skewed to basic residues. Low complexity predominate over residues 534–543 (PQRPGWSRSR). Basic residues-rich tracts occupy residues 544–561 (NTQR…RSHS), 568–721 (GRSR…RRGR), and 730–740 (NKSRTSQRRSR). Phosphoserine is present on residues Ser-700, Ser-702, and Ser-704. Phosphoserine is present on residues Ser-773, Ser-775, and Ser-778. Over residues 785 to 817 (SQTPTRRSRSGSSPPKQKSKTPPRQSRSNSPQP) the composition is skewed to low complexity. A phosphoserine mark is found at Ser-821 and Ser-829. 2 stretches are compositionally biased toward polar residues: residues 829-851 (SVTN…SESS) and 859-874 (RTPS…PRVK). Thr-831 and Thr-841 each carry phosphothreonine. 3 positions are modified to phosphoserine: Ser-846, Ser-850, and Ser-851. 2 stretches are compositionally biased toward low complexity: residues 875–891 (SSTP…SPQP) and 898–919 (SPRG…TSRT). 11 positions are modified to phosphoserine: Ser-882, Ser-909, Ser-924, Ser-926, Ser-928, Ser-940, Ser-942, Ser-944, Ser-945, Ser-946, and Ser-949. Thr-955 carries the phosphothreonine modification. Residues 960-1000 (SGSTSPYLKSMLQTPPDQNLSGSKSPCPQKSRDSPTGSSGS) are compositionally biased toward polar residues. Phosphoserine is present on residues Ser-962 and Ser-964. Tyr-966 bears the Phosphotyrosine mark. Thr-973 bears the Phosphothreonine mark. Residues Ser-980, Ser-984, and Ser-993 each carry the phosphoserine modification. Thr-995 is subject to Phosphothreonine. Phosphoserine is present on residues Ser-997, Ser-1000, Ser-1011, Ser-1037, and Ser-1038. Positions 1024–1057 (VQQKGHTQTWPDTSSPEVMQTQVESPLLQSKSQT) are enriched in polar residues. A disordered region spans residues 1024–1112 (VQQKGHTQTW…TKPDSSIYPL (89 aa)). Residue Thr-1044 is modified to Phosphothreonine. 5 positions are modified to phosphoserine: Ser-1048, Ser-1064, Ser-1066, Ser-1067, and Ser-1068. A compositionally biased stretch (low complexity) spans 1058–1068 (SPKGSLSRSSS). Thr-1071 carries the phosphothreonine modification. Phosphoserine is present on residues Ser-1077, Ser-1087, Ser-1094, Ser-1097, Ser-1117, Ser-1151, Ser-1159, Ser-1175, Ser-1188, Ser-1216, Ser-1225, Ser-1229, Ser-1230, Ser-1269, Ser-1276, Ser-1278, Ser-1284, Ser-1287, Ser-1294, Ser-1305, Ser-1325, Ser-1338, Ser-1339, Ser-1340, Ser-1343, Ser-1359, and Ser-1360. The span at 1079–1092 (VKQDKSEISTDPKL) shows a compositional bias: basic and acidic residues. The interval 1136 to 2092 (IQEDVASSCI…RSPGMLEPLG (957 aa)) is disordered. Basic and acidic residues predominate over residues 1146 to 1158 (PRDKFSPTQDRPE). Over residues 1270-1284 (PEHKELSHSPPRENS) the composition is skewed to basic and acidic residues. Residues 1285–1304 (FESSLEFKNSGPVSEVNTGF) show a composition bias toward polar residues. The residue at position 1370 (Thr-1370) is a Phosphothreonine. A compositionally biased stretch (basic and acidic residues) spans 1371–1387 (PSRERSSSASPELKDGL). Residues Ser-1372, Ser-1378, and Ser-1380 each carry the phosphoserine modification. Position 1390 is a phosphothreonine (Thr-1390). Over residues 1397-1408 (SGSSPGLRDGSG) the composition is skewed to low complexity. Phosphoserine is present on residues Ser-1400 and Ser-1407. Thr-1409 is modified (phosphothreonine). Residues 1409-1431 (TPSRHSLSGSSPGMKDTPQTPSR) are compositionally biased toward polar residues. 4 positions are modified to phosphoserine: Ser-1414, Ser-1416, Ser-1418, and Ser-1419. Thr-1428 carries the phosphothreonine modification. Phosphoserine occurs at positions 1438 and 1439. At Thr-1448 the chain carries Phosphothreonine. Ser-1453, Ser-1455, Ser-1457, Ser-1458, and Ser-1465 each carry phosphoserine. The segment covering 1454–1468 (HSPSSPERNNKSVTP) has biased composition (polar residues). Position 1467 is a phosphothreonine (Thr-1467). A phosphoserine mark is found at Ser-1473, Ser-1475, Ser-1477, and Ser-1478. The span at 1475–1489 (SESSVEQKNLARTSP) shows a compositional bias: polar residues. Thr-1487 is modified (phosphothreonine). A compositionally biased stretch (low complexity) spans 1490–1499 (GQRSRSGSSQ). Ser-1493, Ser-1495, Ser-1497, Ser-1498, and Ser-1508 each carry phosphoserine. Over residues 1511 to 1523 (ERSESDSSPDSKP) the composition is skewed to basic and acidic residues. Basic residues predominate over residues 1524–1533 (KTRTPLRQRS). Phosphoserine is present on residues Ser-1533, Ser-1535, Ser-1537, Ser-1538, Ser-1554, Ser-1556, Ser-1557, Ser-1572, Ser-1576, Ser-1577, Ser-1604, Ser-1614, Ser-1647, Ser-1649, and Ser-1650. Residues 1604-1613 (SPEGSSSSES) show a composition bias toward low complexity. Basic residues predominate over residues 1637-1647 (KSHTPPRRRSS). Thr-1654 bears the Phosphothreonine mark. A phosphoserine mark is found at Ser-1683, Ser-1685, Ser-1687, Ser-1688, Ser-1718, and Ser-1720. 2 stretches are compositionally biased toward basic residues: residues 1725–1745 (GLQR…RRRD) and 1754–1772 (SRRR…RRRG). Phosphoserine occurs at positions 1774, 1778, 1810, 1813, 1832, and 1834. A compositionally biased stretch (low complexity) spans 1776 to 1789 (YHSRSPTRQESSRT). Positions 1790-1810 (SSRRRRGRSRTPLTSRKRSRS) are enriched in basic residues. Residues 1818-2020 (KRSRSRASPA…PRAARGKRSL (203 aa)) show a composition bias toward basic residues. Residue Thr-1836 is modified to Phosphothreonine. Phosphoserine occurs at positions 1840 and 1846. Thr-1848 carries the phosphothreonine modification. Residues Ser-1849, Ser-1869, Ser-1872, Ser-1876, and Ser-1878 each carry the phosphoserine modification. 2 positions are modified to phosphothreonine: Thr-1880 and Thr-1884. A phosphoserine mark is found at Ser-1898 and Ser-1900. 2 positions are modified to phosphothreonine: Thr-1902 and Thr-1906. 2 positions are modified to phosphoserine: Ser-1910 and Ser-1912. 2 positions are modified to phosphothreonine: Thr-1914 and Thr-1918. 3 positions are modified to phosphoserine: Ser-1922, Ser-1924, and Ser-1927. Thr-1930 carries the post-translational modification Phosphothreonine. Phosphoserine occurs at positions 1936, 1939, 1948, 1951, 1960, 1963, 1970, and 1972. At Thr-1974 the chain carries Phosphothreonine. 2 positions are modified to phosphoserine: Ser-1982 and Ser-1984. At Thr-1986 the chain carries Phosphothreonine. Ser-1994, Ser-1996, Ser-1998, and Ser-2019 each carry phosphoserine. Position 2021 is a phosphothreonine (Thr-2021). Positions 2022-2047 (RSPPAIRRRSASGSSSDRSRSATPPA) are enriched in low complexity. Ser-2023 and Ser-2042 each carry phosphoserine. At Thr-2044 the chain carries Phosphothreonine. Ser-2052 and Ser-2054 each carry phosphoserine. Thr-2056 is subject to Phosphothreonine. Residues 2062 to 2076 (SSSRMSCFSRPSMSP) show a composition bias toward low complexity. 4 positions are modified to phosphoserine: Ser-2070, Ser-2073, Ser-2075, and Ser-2084. Thr-2096 bears the Phosphothreonine mark. Arg-2146, Arg-2159, Arg-2183, and Arg-2198 each carry omega-N-methylarginine. Ser-2224 is subject to Phosphoserine. Omega-N-methylarginine occurs at positions 2226 and 2240. Thr-2241 and Thr-2254 each carry phosphothreonine. Ser-2262 bears the Phosphoserine mark. The tract at residues 2263–2703 (LTGSGTPPTA…SNRHRSSRSP (441 aa)) is disordered. Residues Thr-2268 and Thr-2281 each carry the phosphothreonine modification. Polar residues predominate over residues 2269–2283 (PPTAANYPSSSRTPQ). At Arg-2295 the chain carries Omega-N-methylarginine. A phosphoserine mark is found at Ser-2296, Ser-2321, and Ser-2329. Phosphothreonine is present on Thr-2334. Ser-2335 is modified (phosphoserine). Position 2337 is an asymmetric dimethylarginine; alternate (Arg-2337). Arg-2337 carries the post-translational modification Omega-N-methylarginine; alternate. Residues Ser-2347, Ser-2351, and Ser-2360 each carry the phosphoserine modification. The residue at position 2362 (Thr-2362) is a Phosphothreonine. A phosphoserine mark is found at Ser-2365, Ser-2368, Ser-2381, Ser-2384, Ser-2404, and Ser-2408. Polar residues-rich tracts occupy residues 2410–2443 (FSDQ…SASD) and 2467–2476 (TGAQQPSTLA). The span at 2487–2521 (SSSSSSSSSSSSSSSSSSSSSSSSGSSSSDSEGSS) shows a compositional bias: low complexity. A Phosphoserine modification is found at Ser-2535. Thr-2537 carries the phosphothreonine modification. Lys-2541 participates in a covalent cross-link: Glycyl lysine isopeptide (Lys-Gly) (interchain with G-Cter in SUMO2). Thr-2553 is subject to Phosphothreonine. The segment covering 2562–2602 (SSSSSSSSSSSSSSSSSSSSSSSSSSSSSSSSSSSSSSSSS) has biased composition (low complexity). Positions 2605-2622 (PAKPGPQALPKPASPKKP) are enriched in pro residues. Phosphoserine is present on residues Ser-2618, Ser-2629, Ser-2631, Ser-2638, Ser-2642, Ser-2644, Ser-2646, Ser-2648, Ser-2656, and Ser-2660. Over residues 2623 to 2643 (PPGERRSRSPRKPIDSLRDSR) the composition is skewed to basic and acidic residues. Thr-2689 is modified (phosphothreonine). Ser-2691 bears the Phosphoserine mark. The segment covering 2694–2703 (SNRHRSSRSP) has biased composition (basic residues).

This sequence belongs to the CWC21 family. In terms of assembly, component of pre-catalytic, catalytic and post-catalytic spliceosome complexes. Found in a pre-mRNA splicing complex with SFRS4, SFRS5, SNRP70, SNRPA1, SRRM1 and SRRM2. Component of the minor spliceosome, which splices U12-type introns. Interacts with DHX8. Interacts with CACTIN.

Its subcellular location is the nucleus. The protein localises to the nucleus speckle. In terms of biological role, required for pre-mRNA splicing as component of the spliceosome. As a component of the minor spliceosome, involved in the splicing of U12-type introns in pre-mRNAs. The sequence is that of Serine/arginine repetitive matrix protein 2 (Srrm2) from Mus musculus (Mouse).